Reading from the N-terminus, the 98-residue chain is MSRNELDERIETYYVRVRGVVQGVGFRHATVREAHALKLRGWVANLEDGTVEAMIQGPGAQIDRMLAWLRHGPPAARVTEVTFEERRTEKRFERFQQQ.

Residues 12 to 98 form the Acylphosphatase-like domain; it reads TYYVRVRGVV…EKRFERFQQQ (87 aa). Catalysis depends on residues arginine 27 and asparagine 45.

This sequence belongs to the acylphosphatase family.

The enzyme catalyses an acyl phosphate + H2O = a carboxylate + phosphate + H(+). This Burkholderia cenocepacia (strain HI2424) protein is Acylphosphatase (acyP).